The sequence spans 228 residues: 2-hydroxy-3-keto-5-methylthiopentenyl-1-phosphate phosphatase (228 aa).

Belongs to the HAD-like hydrolase superfamily. MtnX family.

The catalysed reaction is 2-hydroxy-5-methylsulfanyl-3-oxopent-1-enyl phosphate + H2O = 1,2-dihydroxy-5-(methylsulfanyl)pent-1-en-3-one + phosphate. The protein operates within amino-acid biosynthesis; L-methionine biosynthesis via salvage pathway; L-methionine from S-methyl-5-thio-alpha-D-ribose 1-phosphate: step 4/6. In terms of biological role, dephosphorylates 2-hydroxy-3-keto-5-methylthiopentenyl-1-phosphate (HK-MTPenyl-1-P) yielding 1,2-dihydroxy-3-keto-5-methylthiopentene (DHK-MTPene). This Lysinibacillus sphaericus (strain C3-41) protein is 2-hydroxy-3-keto-5-methylthiopentenyl-1-phosphate phosphatase.